Consider the following 398-residue polypeptide: Nicotinate phosphoribosyltransferase (398 aa).

His-214 carries the post-translational modification Phosphohistidine; by autocatalysis.

The protein belongs to the NAPRTase family. Transiently phosphorylated on a His residue during the reaction cycle. Phosphorylation strongly increases the affinity for substrates and increases the rate of nicotinate D-ribonucleotide production. Dephosphorylation regenerates the low-affinity form of the enzyme, leading to product release.

The catalysed reaction is nicotinate + 5-phospho-alpha-D-ribose 1-diphosphate + ATP + H2O = nicotinate beta-D-ribonucleotide + ADP + phosphate + diphosphate. Its pathway is cofactor biosynthesis; NAD(+) biosynthesis; nicotinate D-ribonucleotide from nicotinate: step 1/1. Functionally, catalyzes the synthesis of beta-nicotinate D-ribonucleotide from nicotinate and 5-phospho-D-ribose 1-phosphate at the expense of ATP. This chain is Nicotinate phosphoribosyltransferase, found in Xanthomonas campestris pv. campestris (strain 8004).